We begin with the raw amino-acid sequence, 262 residues long: MAWLEDVDFLEDVPLLEDIPLLEDVPLLEDVPLLEDTSRLEDINLMEDMALLEDVDLLEDTDFLEDLDFSEAMDLREDKDFLEDMDSLEDMALLEDVDLLEDTDFLEDPDFLEAIDLREDKDFLEDMDSLEDLEAIGRCGFSGRHGFFGRRRFSGRPKLSGRLGLLGRRGFSGRLGGYWKTWIFWKTWIFWKTWIFRKTYIGWKTWIFSGRCGLTGRPGFGGRRRFFWKTLTDWKTWISFWKTLIDWKTWISFWKTLIDWKI.

34 consecutive repeat copies span residues 3-8 (WLEDVD), 9-14 (FLEDVP), 15-20 (LLEDIP), 21-26 (LLEDVP), 27-32 (LLEDVP), 33-38 (LLEDTS), 39-44 (RLEDIN), 45-50 (LMEDMA), 51-56 (LLEDVD), 57-62 (LLEDTD), 63-68 (FLEDLD), 69-74 (FSEAMD), 75-80 (LREDKD), 81-86 (FLEDMD), 87-92 (SLEDMA), 93-98 (LLEDVD), 99-104 (LLEDTD), 105-110 (FLEDPD), 111-116 (FLEAID), 117-122 (LREDKD), 123-128 (FLEDMD), 129-134 (SLEDLE), 135-140 (AIGRCG), 141-146 (FSGRHG), 147-152 (FFGRRR), 153-158 (FSGRPK), 159-164 (LSGRLG), 165-170 (LLGRRG), 171-176 (FSGRLG), 177-182 (GYWKTW), 183-188 (IFWKTW), 189-194 (IFWKTW), 195-200 (IFRKTY), and 201-206 (IGWKTW). The segment at 3-140 (WLEDVDFLED…EDLEAIGRCG (138 aa)) is 23 X 6 AA approximate repeats. The 6 X 6 AA approximate repeats stretch occupies residues 141–176 (FSGRHGFFGRRRFSGRPKLSGRLGLLGRRGFSGRLG). Residues 177 to 206 (GYWKTWIFWKTWIFWKTWIFRKTYIGWKTW) form a 5 X 6 AA approximate repeats region.

As to expression, brain; predominantly expressed in normal neuroectodermal tissues and in certain malignant tumors.

In Homo sapiens (Human), this protein is Cerebellar degeneration-related antigen 1 (CDR1).